The primary structure comprises 283 residues: Bifunctional protein FolD (283 aa).

Residues 163–165 (GRS), Ser188, and Ile229 contribute to the NADP(+) site.

The protein belongs to the tetrahydrofolate dehydrogenase/cyclohydrolase family. In terms of assembly, homodimer.

It carries out the reaction (6R)-5,10-methylene-5,6,7,8-tetrahydrofolate + NADP(+) = (6R)-5,10-methenyltetrahydrofolate + NADPH. The enzyme catalyses (6R)-5,10-methenyltetrahydrofolate + H2O = (6R)-10-formyltetrahydrofolate + H(+). The protein operates within one-carbon metabolism; tetrahydrofolate interconversion. Functionally, catalyzes the oxidation of 5,10-methylenetetrahydrofolate to 5,10-methenyltetrahydrofolate and then the hydrolysis of 5,10-methenyltetrahydrofolate to 10-formyltetrahydrofolate. The chain is Bifunctional protein FolD from Campylobacter fetus subsp. fetus (strain 82-40).